We begin with the raw amino-acid sequence, 388 residues long: Succinate--CoA ligase [ADP-forming] subunit beta (388 aa).

The ATP-grasp domain maps to 9–244 (KQLFAEYGLP…PSQDDPREAH (236 aa)). ATP-binding positions include K46, 53-55 (GRG), E99, T102, and E107. Mg(2+)-binding residues include N199 and D213. Substrate is bound by residues N264 and 321-323 (GIV).

The protein belongs to the succinate/malate CoA ligase beta subunit family. As to quaternary structure, heterotetramer of two alpha and two beta subunits. The cofactor is Mg(2+).

The catalysed reaction is succinate + ATP + CoA = succinyl-CoA + ADP + phosphate. It carries out the reaction GTP + succinate + CoA = succinyl-CoA + GDP + phosphate. It participates in carbohydrate metabolism; tricarboxylic acid cycle; succinate from succinyl-CoA (ligase route): step 1/1. Its function is as follows. Succinyl-CoA synthetase functions in the citric acid cycle (TCA), coupling the hydrolysis of succinyl-CoA to the synthesis of either ATP or GTP and thus represents the only step of substrate-level phosphorylation in the TCA. The beta subunit provides nucleotide specificity of the enzyme and binds the substrate succinate, while the binding sites for coenzyme A and phosphate are found in the alpha subunit. The sequence is that of Succinate--CoA ligase [ADP-forming] subunit beta from Aeromonas hydrophila subsp. hydrophila (strain ATCC 7966 / DSM 30187 / BCRC 13018 / CCUG 14551 / JCM 1027 / KCTC 2358 / NCIMB 9240 / NCTC 8049).